Reading from the N-terminus, the 236-residue chain is Baculoviral IAP repeat-containing protein 8 (236 aa).

A BIR repeat occupies 7–70; that stretch reads RLITFGTWMY…KWYPGCKYLL (64 aa). The Zn(2+) site is built by Cys39, Cys42, His59, and Cys66. An RING-type zinc finger spans residues 189-224; it reads CKICMDRHIAVVFIPCGHLVTCKQCAEAVDRCPMCS.

It belongs to the IAP family. Binds to caspase-9.

It is found in the cytoplasm. Its function is as follows. Protects against apoptosis mediated by BAX. The protein is Baculoviral IAP repeat-containing protein 8 (BIRC8) of Pan troglodytes (Chimpanzee).